The sequence spans 283 residues: NADPH-dependent 3-dehydrocapnine reductase (283 aa).

Tyr-153 functions as the Proton acceptor in the catalytic mechanism.

It belongs to the short-chain dehydrogenases/reductases (SDR) family.

The enzyme catalyses 3-oxocapnine + NADPH + H(+) = capnine + NADP(+). It functions in the pathway lipid metabolism. In terms of biological role, reductase involved in the biosynthesis of capnine, a sulfonolipid present in the outer membrane of gliding Bacteroidetes and essential for gliding motility. Catalyzes the reduction of 3-dehydrocapnine to capnine. In Ornithobacterium rhinotracheale, this protein is NADPH-dependent 3-dehydrocapnine reductase.